A 627-amino-acid polypeptide reads, in one-letter code: Membrane protein insertase YidC (627 aa).

Helical transmembrane passes span 3 to 23 (KNTV…SWLN), 376 to 396 (WGLI…PLAY), 450 to 470 (LPML…PTTI), 502 to 522 (FYGN…ILYI), 534 to 554 (EGMA…LFFF), and 558 to 578 (ASGL…QYMS).

It belongs to the OXA1/ALB3/YidC family. Type 1 subfamily. As to quaternary structure, interacts with the Sec translocase complex via SecD. Specifically interacts with transmembrane segments of nascent integral membrane proteins during membrane integration.

The protein localises to the cell inner membrane. In terms of biological role, required for the insertion and/or proper folding and/or complex formation of integral membrane proteins into the membrane. Involved in integration of membrane proteins that insert both dependently and independently of the Sec translocase complex, as well as at least some lipoproteins. Aids folding of multispanning membrane proteins. The chain is Membrane protein insertase YidC from Porphyromonas gingivalis (strain ATCC BAA-308 / W83).